The sequence spans 226 residues: Protein B (226 aa).

Residues 37 to 100 (DNVQGTDYEK…FSTQHLANKV (64 aa)) are igG constant region-binding. 3 repeats span residues 158-168 (TKSKLDKEIWN), 169-179 (TRFTRDKKVLN), and 180-190 (VKEFKVYNTLN).

Its subcellular location is the secreted. Protein B belongs to the group of bacterial Fc-binding protein. This chain is Protein B, found in Streptococcus agalactiae.